The following is a 456-amino-acid chain: Gamma-aminobutyric acid receptor subunit alpha-1 (456 aa).

Residues 1–27 (MRKSPGLSDCLWAWILLLSTLTGRSYG) form the signal peptide. The Extracellular portion of the chain corresponds to 28-253 (QPSLQDELKD…FHLKRKIGYF (226 aa)). A glycan (N-linked (GlcNAc...) asparagine) is linked at Asn-38. A 4-aminobutanoate-binding site is contributed by Arg-94. Asn-138 carries N-linked (GlcNAc...) asparagine glycosylation. Thr-157 serves as a coordination point for 4-aminobutanoate. A disulfide bridge links Cys-166 with Cys-180. A helical transmembrane segment spans residues 254–274 (VIQTYLPCIMTVILSQVSFWL). Residues 275 to 279 (NRESV) lie on the Cytoplasmic side of the membrane. The chain crosses the membrane as a helical span at residues 280–301 (PARTVFGVTTVLTMTTLSISAR). Topologically, residues 302–311 (NSLPKVAYAT) are extracellular. A helical transmembrane segment spans residues 312 to 333 (AMDWFIAVCYAFVFSALIEFAT). Topologically, residues 334–421 (VNYFTKRGYA…TFNSVSKIDR (88 aa)) are cytoplasmic. The chain crosses the membrane as a helical span at residues 422–441 (LSRIAFPLLFGIFNLIYWAT). Residues 442–456 (YLNREPQLKAPTPHQ) are Extracellular-facing.

The protein belongs to the ligand-gated ion channel (TC 1.A.9) family. Gamma-aminobutyric acid receptor (TC 1.A.9.5) subfamily. GABRA1 sub-subfamily. In terms of assembly, heteropentamer, formed by a combination of alpha (GABRA1-6), beta (GABRB1-3), gamma (GABRG1-3), delta (GABRD), epsilon (GABRE), rho (GABRR1-3), pi (GABRP) and theta (GABRQ) subunits, each subunit exhibiting distinct physiological and pharmacological properties. Interacts with UBQLN1. Interacts with TRAK1. Interacts with KIF21B. Identified in a complex of 720 kDa composed of LHFPL4, NLGN2, GABRA1, GABRB2, GABRG2 and GABRB3. Interacts with LHFPL4. Interacts with NLGN2. Interacts with SHISA7; interaction leads to the regulation of GABA(A) receptor trafficking, channel deactivation kinetics and pharmacology.

The protein resides in the postsynaptic cell membrane. It is found in the cell membrane. The protein localises to the cytoplasmic vesicle membrane. The enzyme catalyses chloride(in) = chloride(out). With respect to regulation, allosterically activated by benzodiazepines, the neuroanesthetic alphaxalone and pentobarbital. Inhibited by the antagonist bicuculline. Potentiated by histamine. In terms of biological role, alpha subunit of the heteropentameric ligand-gated chloride channel gated by gamma-aminobutyric acid (GABA), a major inhibitory neurotransmitter in the brain. GABA-gated chloride channels, also named GABA(A) receptors (GABAAR), consist of five subunits arranged around a central pore and contain GABA active binding site(s) located at the alpha and beta subunit interface(s). When activated by GABA, GABAARs selectively allow the flow of chloride anions across the cell membrane down their electrochemical gradient. Alpha-1/GABRA1-containing GABAARs are largely synaptic. Chloride influx into the postsynaptic neuron following GABAAR opening decreases the neuron ability to generate a new action potential, thereby reducing nerve transmission. GABAARs containing alpha-1 and beta-2 or -3 subunits exhibit synaptogenic activity; the gamma-2 subunit being necessary but not sufficient to induce rapid synaptic contacts formation. GABAARs function also as histamine receptor where histamine binds at the interface of two neighboring beta subunits and potentiates GABA response. GABAARs containing alpha, beta and epsilon subunits also permit spontaneous chloride channel activity while preserving the structural information required for GABA-gated openings. Alpha-1-mediated plasticity in the orbitofrontal cortex regulates context-dependent action selection. Together with rho subunits, may also control neuronal and glial GABAergic transmission in the cerebellum. The sequence is that of Gamma-aminobutyric acid receptor subunit alpha-1 (GABRA1) from Pongo abelii (Sumatran orangutan).